Here is a 470-residue protein sequence, read N- to C-terminus: Cyclic AMP-responsive element-binding protein 3-like protein 3 (470 aa).

Residues 1 to 319 (MDGDISTGKM…TSKPAHAGTC (319 aa)) are Cytoplasmic-facing. A disordered region spans residues 59–145 (SDSDEFLNSI…PEPPRTQVHE (87 aa)). A bZIP domain is found at 239-302 (VLKKIRRKIR…LSLLEQLKHL (64 aa)). Positions 241 to 270 (KKIRRKIRNKQSAQESRKKKKEYIDGLENR) are basic motif. The leucine-zipper stretch occupies residues 281 to 302 (LQRKVLHLEKQNLSLLEQLKHL). A Glycyl lysine isopeptide (Lys-Gly) (interchain with G-Cter in ubiquitin) cross-link involves residue lysine 290. A helical; Signal-anchor for type II membrane protein membrane pass occupies residues 320–340 (IAVLLLSFVLIILPSISPFTA). Residues 341-470 (NKVDSPGDFI…RVVQDALGVL (130 aa)) lie on the Lumenal side of the membrane. Residues asparagine 410 and asparagine 417 are each glycosylated (N-linked (GlcNAc...) asparagine).

It belongs to the bZIP family. ATF subfamily. In terms of assembly, binds DNA as a dimer. May form homodimers. Interacts with ATF6. Interacts with SYNV1/HRD1; this interaction leads to CREB3L3 ubiquitination and proteasomal degradation. Post-translationally, controlled by regulated intramembrane proteolysis (RIP). Following ER stress a fragment containing the cytoplasmic transcription factor domain is released by proteolysis. The cleavage seems to be performed sequentially by site-1 and site-2 proteases (PS1 and PS2). In terms of processing, N-glycosylation is required for optimal proteolytic activation. Ubiquitinated at Lys-290 by SYNV1/HRD1 via 'Lys-27'-linked ubiquitin.

It is found in the endoplasmic reticulum membrane. The protein localises to the nucleus. Its function is as follows. Transcription factor that may act during endoplasmic reticulum stress by activating unfolded protein response target genes. Activated in response to cAMP stimulation. Binds the cAMP response element (CRE). Activates transcription through box-B element and CRE. Seems to function synergistically with ATF6. In acute inflammatory response, may activate expression of acute phase response (APR) genes. May be involved in growth suppression. Regulates FGF21 transcription. Plays a crucial role in the regulation of triglyceride metabolism and is required for the maintenance of normal plasma triglyceride concentrations. The sequence is that of Cyclic AMP-responsive element-binding protein 3-like protein 3 (Creb3l3) from Rattus norvegicus (Rat).